The chain runs to 508 residues: Histone acetyltransferase type B catalytic subunit (508 aa).

2 interaction with histone H4 N-terminus regions span residues E44 to E46 and Y207 to Y209. Acetyl-CoA is bound by residues F249–I251 and Q256–S262. Residue E284 is the Proton donor/acceptor of the active site. Disordered stretches follow at residues S364–E399 and Q461–A508. The segment covering K387–E399 has biased composition (basic and acidic residues).

The protein belongs to the HAT1 family. As to quaternary structure, component of the HAT-B complex composed of at least hat-1 and hat-2. The HAT-B complex binds to histone H4 tail.

Its subcellular location is the cytoplasm. It is found in the nucleus. It carries out the reaction L-lysyl-[protein] + acetyl-CoA = N(6)-acetyl-L-lysyl-[protein] + CoA + H(+). In terms of biological role, catalytic component of the histone acetylase B (HAT-B) complex. Acetylates 'Lys-12' of histone H4 which is required for telomeric silencing. Has intrinsic substrate specificity that modifies lysine in recognition sequence GXGKXG. Involved in DNA double-strand break repair. This is Histone acetyltransferase type B catalytic subunit (hat-1) from Neurospora crassa (strain ATCC 24698 / 74-OR23-1A / CBS 708.71 / DSM 1257 / FGSC 987).